We begin with the raw amino-acid sequence, 283 residues long: Elongation factor Ts (283 aa).

The tract at residues 84–87 (TDFV) is involved in Mg(2+) ion dislocation from EF-Tu.

Belongs to the EF-Ts family.

Its subcellular location is the cytoplasm. In terms of biological role, associates with the EF-Tu.GDP complex and induces the exchange of GDP to GTP. It remains bound to the aminoacyl-tRNA.EF-Tu.GTP complex up to the GTP hydrolysis stage on the ribosome. The protein is Elongation factor Ts of Bifidobacterium longum subsp. infantis (strain ATCC 15697 / DSM 20088 / JCM 1222 / NCTC 11817 / S12).